A 186-amino-acid chain; its full sequence is Putative adenylate kinase (186 aa).

Positions 10, 12, 13, 14, and 15 each coordinate ATP. Positions 30 to 53 are NMP; it reads HLNELIKEEHLYTEVDEKRDSVVA. The LID stretch occupies residues 108–118; the sequence is KRGYSEEKVNE. R109 contributes to the ATP binding site.

It belongs to the adenylate kinase family. AK6 subfamily. As to quaternary structure, interacts with uS11. Not a structural component of 40S pre-ribosomes, but transiently interacts with them by binding to uS11.

The enzyme catalyses AMP + ATP = 2 ADP. It carries out the reaction ATP + H2O = ADP + phosphate + H(+). Functionally, broad-specificity nucleoside monophosphate (NMP) kinase that catalyzes the reversible transfer of the terminal phosphate group between nucleoside triphosphates and monophosphates. Also has ATPase activity. Involved in the late maturation steps of the 30S ribosomal particles, specifically 16S rRNA maturation. While NMP activity is not required for ribosome maturation, ATPase activity is. Associates transiently with small ribosomal subunit protein uS11. ATP hydrolysis breaks the interaction with uS11. May temporarily remove uS11 from the ribosome to enable a conformational change of the ribosomal RNA that is needed for the final maturation step of the small ribosomal subunit. The chain is Putative adenylate kinase from Methanosarcina acetivorans (strain ATCC 35395 / DSM 2834 / JCM 12185 / C2A).